The following is a 207-amino-acid chain: Small ribosomal subunit protein uS4 (207 aa).

The interval 31-56 is disordered; that stretch reads KCKLDSKPGQHGRTSGARTSDYGNQL. Residues 42-53 show a composition bias toward polar residues; sequence GRTSGARTSDYG. One can recognise an S4 RNA-binding domain in the interval 97–157; the sequence is TRLDNVVYRM…EKSKKQVRIV (61 aa).

Belongs to the universal ribosomal protein uS4 family. As to quaternary structure, part of the 30S ribosomal subunit. Contacts protein S5. The interaction surface between S4 and S5 is involved in control of translational fidelity.

Functionally, one of the primary rRNA binding proteins, it binds directly to 16S rRNA where it nucleates assembly of the body of the 30S subunit. Its function is as follows. With S5 and S12 plays an important role in translational accuracy. In Herminiimonas arsenicoxydans, this protein is Small ribosomal subunit protein uS4.